The following is a 369-amino-acid chain: Delta(14)-sterol reductase (369 aa).

Transmembrane regions (helical) follow at residues 15–34 (QSVYVLVFYFVYLAVAGEIL), 54–76 (CNGLLALILLVAILGICAKLGIV), 86–105 (LELLSATFIFCVLVTLALYV), 146–168 (FFFVRAGMMGWLLINLSILAKSV), 178–195 (ILYQIFCALYILDYFVHE), 208–230 (RLGFMLVFGDLLWIPFTFSIQGW), and 240–262 (TVPAIVVNCLVFLIGYMVFRGAN). Residues Lys-265, Lys-269, Leu-289, Trp-294, and 301 to 302 (NY) contribute to the NADP(+) site. Residues 275–297 (PIWGKPPVVVGGKLLVSGYWGIA) form a helical membrane-spanning segment. The helical transmembrane segment at 317 to 336 (GISSPVPYFYPIYLLILLIW) threads the bilayer. NADP(+) contacts are provided by residues Asp-341, 345 to 349 (CAEKY), and Tyr-356.

The protein belongs to the ERG4/ERG24 family.

Its subcellular location is the membrane. It catalyses the reaction 4,4-dimethyl-5alpha-cholesta-8,24-dien-3beta-ol + NADP(+) = 4,4-dimethyl-5alpha-cholesta-8,14,24-trien-3beta-ol + NADPH + H(+). It participates in steroid biosynthesis; zymosterol biosynthesis; zymosterol from lanosterol: step 2/6. Its function is as follows. Reduces the C14=C15 double bond of 4,4-dimethyl-cholesta-8,14,24-trienol to produce 4,4-dimethyl-cholesta-8,24-dienol. Required for cell division and expansion and is involved in proper organization of the embryo. This Arabidopsis thaliana (Mouse-ear cress) protein is Delta(14)-sterol reductase (FK).